The primary structure comprises 440 residues: D-serine dehydratase (440 aa).

N6-(pyridoxal phosphate)lysine is present on Lys116.

Belongs to the serine/threonine dehydratase family. DsdA subfamily. As to quaternary structure, monomer. It depends on pyridoxal 5'-phosphate as a cofactor.

It catalyses the reaction D-serine = pyruvate + NH4(+). The sequence is that of D-serine dehydratase from Salmonella agona (strain SL483).